A 542-amino-acid polypeptide reads, in one-letter code: Pre-mRNA-splicing factor 38B (542 aa).

Positions 1–12 are enriched in polar residues; it reads MANNSPALTGNS. Residues 1-41 are disordered; it reads MANNSPALTGNSQPQHQAAAAVTQQQQQCGGGGGATKPAVS. Alanine 2 carries the N-acetylalanine modification. Phosphoserine is present on serine 5. Positions 13 to 28 are enriched in low complexity; sequence QPQHQAAAAVTQQQQQ. N6-acetyllysine is present on lysine 228. Residues 233–542 are disordered; it reads QIKTRPRKIK…KEHKSKDETV (310 aa). A compositionally biased stretch (basic and acidic residues) spans 244–256; the sequence is DGKEGIEEIDRHV. Residues 257–285 are compositionally biased toward basic residues; sequence ERRRSRSPRRSLSPRRSPRRSRSRSHHRE. Serine 289, serine 291, serine 319, and serine 321 each carry phosphoserine. Basic and acidic residues predominate over residues 292–328; that stretch reads FDRELEREKERQRLEREAKEREKERRRSRSIDRGLDR. Residues 293–322 adopt a coiled-coil conformation; the sequence is DRELEREKERQRLEREAKEREKERRRSRSI. Positions 329–345 are enriched in basic residues; sequence RRSRSRERHRSRSRSRD. The span at 346–419 shows a compositional bias: basic and acidic residues; the sequence is RKGDRRDRDR…DRRHRDDKKE (74 aa). A compositionally biased stretch (basic residues) spans 420 to 447; sequence SKKKHSRSRSRERKHRSRSRNAGKRSRS. The residue at position 445 (serine 445) is a Phosphoserine. A compositionally biased stretch (basic and acidic residues) spans 448-465; it reads RSKDKSSRHKNESKEKAN. Phosphoserine is present on residues serine 470, serine 472, and serine 478. 2 stretches are compositionally biased toward basic and acidic residues: residues 478-491 and 498-520; these read SVEK…PSRE and RSQD…RQDH. Phosphoserine is present on residues serine 523, serine 525, and serine 530. Positions 530–542 are enriched in basic and acidic residues; that stretch reads SQEKEHKSKDETV.

Belongs to the PRP38 family.

Its subcellular location is the nucleus. Its function is as follows. May be required for pre-mRNA splicing. The chain is Pre-mRNA-splicing factor 38B (Prpf38b) from Mus musculus (Mouse).